A 669-amino-acid polypeptide reads, in one-letter code: Polyamine deacetylase HDAC10 (669 aa).

The histone deacetylase stretch occupies residues 1–323 (MGTALVYHED…VCMTVQTLLG (323 aa)). Asp-20 provides a ligand contact to substrate. The Substrate specificity motif lies at 21-24 (PECE). His-135 functions as the Proton donor/acceptor in the catalytic mechanism. Residues Asp-172, His-174, and Asp-265 each coordinate Zn(2+). Tyr-305 serves as a coordination point for substrate. Polar residues predominate over residues 361-373 (DVTAVPMSPSSHS). A disordered region spans residues 361 to 387 (DVTAVPMSPSSHSPEGRPPPLLPGGPV). Ser-393 bears the Phosphoserine mark.

Belongs to the histone deacetylase family. HD type 2 subfamily. Interacts with HDAC3. Interacts with HDAC2 and NCOR2/SMRT. Interacts with HSPA8/HSC70. Interacts with MSH2. In terms of tissue distribution, widely expressed with high levels in liver and kidney.

It is found in the cytoplasm. The protein localises to the nucleus. The enzyme catalyses N(8)-acetylspermidine + H2O = spermidine + acetate. It carries out the reaction N-acetylputrescine + H2O = putrescine + acetate. The catalysed reaction is N-acetylcadaverine + H2O = cadaverine + acetate. It catalyses the reaction N(6)-acetyl-L-lysyl-[protein] + H2O = L-lysyl-[protein] + acetate. Polyamine deacetylase (PDAC), which acts preferentially on N(8)-acetylspermidine, and also on acetylcadaverine and acetylputrescine. Exhibits attenuated catalytic activity toward N(1),N(8)-diacetylspermidine and very low activity, if any, toward N(1)-acetylspermidine. Histone deacetylase activity has been observed in vitro. Has also been shown to be involved in MSH2 deacetylation. The physiological relevance of protein/histone deacetylase activity is unclear and could be very weak. May play a role in the promotion of late stages of autophagy, possibly autophagosome-lysosome fusion and/or lysosomal exocytosis in neuroblastoma cells. May play a role in homologous recombination. May promote DNA mismatch repair. The polypeptide is Polyamine deacetylase HDAC10 (HDAC10) (Homo sapiens (Human)).